The primary structure comprises 430 residues: Microtubule-associated protein tau (430 aa).

Basic and acidic residues predominate over residues M1–E16. Positions M1–V245 are disordered. A2 is modified (N-acetylalanine). Y18 carries the post-translational modification Phosphotyrosine. K31 is covalently cross-linked (Glycyl lysine isopeptide (Lys-Gly) (interchain with G-Cter in ubiquitin)). 2 positions are modified to phosphoserine: S33 and S48. Positions S48–T58 are enriched in polar residues. 3 positions are modified to phosphothreonine: T56, T58, and T98. Residues K117–D133 are compositionally biased toward basic and acidic residues. Residue T142 is modified to Phosphothreonine. Omega-N-methylarginine is present on R144. An N6,N6-dimethyllysine; alternate modification is found at K152. Residue K152 is modified to N6-acetyllysine; alternate. T158, T164, T165, and T170 each carry phosphothreonine. Positions P161–S203 are enriched in low complexity. Phosphoserine is present on residues S180 and S184. Y186 is modified (phosphotyrosine). S187, S188, and S191 each carry phosphoserine. T194 and T201 each carry phosphothreonine. S203 is modified (phosphoserine). Residue T206 is modified to Phosphothreonine. N6-acetyllysine is present on K214. T220 carries the phosphothreonine modification. S224 and S226 each carry phosphoserine. Tau/MAP repeat units follow at residues Q233 to K263, V264 to S294, V295 to Q325, and V326 to N357. Residue K243 forms a Glycyl lysine isopeptide (Lys-Gly) (interchain with G-Cter in ubiquitin) linkage. Position 248 is an N6-acetyllysine; alternate (K248). The residue at position 248 (K248) is an N6-methyllysine; alternate. K248 participates in a covalent cross-link: Glycyl lysine isopeptide (Lys-Gly) (interchain with G-Cter in ubiquitin); alternate. S251 carries the phosphoserine modification. Residue K256 forms a Glycyl lysine isopeptide (Lys-Gly) (interchain with G-Cter in ubiquitin) linkage. The residue at position 270 (K270) is an N6-acetyllysine; alternate. K270 participates in a covalent cross-link: Glycyl lysine isopeptide (Lys-Gly) (interchain with G-Cter in ubiquitin); alternate. 2 positions are modified to phosphoserine: S274 and S278. An N6-acetyllysine modification is found at K279. Residues C280 and C311 are joined by a disulfide bond. S282 bears the Phosphoserine mark. Residue K287 is modified to N6-acetyllysine; alternate. K287 is covalently cross-linked (Glycyl lysine isopeptide (Lys-Gly) (interchain with G-Cter in ubiquitin); alternate). S294 bears the Phosphoserine mark. An N6,N6-dimethyllysine; alternate modification is found at K300. 3 positions are modified to N6-acetyllysine; alternate: K300, K306, and K310. Glycyl lysine isopeptide (Lys-Gly) (interchain with G-Cter in ubiquitin); alternate cross-links involve residues K300, K306, and K310. S313 bears the Phosphoserine mark. An N6-acetyllysine; alternate mark is found at K320, K332, and K336. Residues K320, K332, and K336 each participate in a glycyl lysine isopeptide (Lys-Gly) (interchain with G-Cter in ubiquitin); alternate cross-link. R338 carries the post-translational modification Omega-N-methylarginine. Residue S341 is modified to Phosphoserine. Residue K342 forms a Glycyl lysine isopeptide (Lys-Gly) (interchain with G-Cter in ubiquitin) linkage. Position 345 is a phosphoserine (S345). K358 bears the N6-acetyllysine; alternate mark. K358 participates in a covalent cross-link: Glycyl lysine isopeptide (Lys-Gly) (interchain with G-Cter in ubiquitin); alternate. A Glycyl lysine isopeptide (Lys-Gly) (interchain with G-Cter in ubiquitin) cross-link involves residue K364. At K374 the chain carries N6-acetyllysine; alternate. Residue K374 forms a Glycyl lysine isopeptide (Lys-Gly) (interchain with G-Cter in ubiquitin); alternate linkage. The residue at position 383 (Y383) is a Phosphotyrosine. Phosphoserine occurs at positions 385 and 389. The disordered stretch occupies residues V387 to I406. Residues G390–I406 show a composition bias toward polar residues. T392 carries the post-translational modification Phosphothreonine. Residues S393, S398, S405, and S411 each carry the phosphoserine modification. Residue T416 is modified to Phosphothreonine.

As to quaternary structure, interacts with MARK1, MARK2, MARK3 and MARK4. Interacts with SQSTM1 when polyubiquitinated. Interacts with PSMC2 through SQSTM1. Interacts with FKBP4. Binds to CSNK1D. Interacts with SGK1. Interacts with PIN1. Interacts with LRRK2. Interacts with LRP1, leading to endocytosis; this interaction is reduced in the presence of LRPAP1/RAP. Post-translationally, polyubiquitinated. Requires functional TRAF6 and may provoke SQSTM1-dependent degradation by the proteasome. In terms of processing, phosphorylation at various serine and threonine residues in S-P or T-P motifs by proline-directed protein kinases (PDPK1, CDK1, CDK5, GSK3, MAPK) (a few sites per protein in interphase, more in mitosis), and at serine residues in K-X-G-S motifs by MAP/microtubule affinity-regulating kinase (MARK1, MARK2, MARK3 or MARK4), causing detachment from microtubules, and their disassembly. Phosphorylation at Ser-345 by BRSK1 and BRSK2 in neurons affects ability to bind microtubules and plays a role in neuron polarization. Phosphorylated by PHK. Dephosphorylation at several serine and threonine residues by the serine/threonine phosphatase PPP5C. Hyperphosphorylated (in particular at Thr-170, Ser-191, Thr-194, Ser-251, and Ser-345) during hibernation. Phosphorylation is fully reversible after arousal. Highly phosphorylated tau contains a number of paired helical filaments (PHFs)-like epitopes. PHF-like phosphorylation is not associated with fibril formation. Distribution of PHF-like tau is more intense in the entorhinal cortex, hippocampus and isocortical areas. PHF-like phosphorylation-dephosphorylation during hibernation cycle is synchronized with regression-re-establishment of afferentation. It may reflect a protective mechanism in an unfavorable environment.

The protein resides in the cytoplasm. The protein localises to the cytosol. It localises to the cell membrane. It is found in the cytoskeleton. Its subcellular location is the cell projection. The protein resides in the axon. The protein localises to the dendrite. Functionally, promotes microtubule assembly and stability, and might be involved in the establishment and maintenance of neuronal polarity. The C-terminus binds axonal microtubules while the N-terminus binds neural plasma membrane components, suggesting that tau functions as a linker protein between both. Axonal polarity is predetermined by tau localization (in the neuronal cell) in the domain of the cell body defined by the centrosome. The short isoforms allow plasticity of the cytoskeleton whereas the longer isoforms may preferentially play a role in its stabilization. This is Microtubule-associated protein tau (MAPT) from Spermophilus citellus (European ground squirrel).